A 710-amino-acid chain; its full sequence is Pentatricopeptide repeat-containing protein At3g14330 (710 aa).

PPR repeat units follow at residues 166-196 (NPKL…VTDS), 200-234 (TEKV…FIEP), 235-269 (GNFS…KEKV), 270-304 (DQVV…NVVT), 305-331 (WNSL…MQEE), 336-370 (SWAT…KEKP), 371-401 (DVPL…MLTK), 402-436 (DLAS…GVAP), 437-467 (DGIT…MKTE), and 473-503 (ALEH…MPFK). Residues 508-583 (IWGSLLNSCR…EAGCSWVQVK (76 aa)) are type E motif. A type E(+) motif region spans residues 584 to 615 (DKIQIFVAGGGYEFRNSDEYKKVWTELQEAIE). The segment at 616-710 (KSGYSPNTSV…DGICSCKDYW (95 aa)) is type DYW motif.

It belongs to the PPR family. PCMP-H subfamily.

This chain is Pentatricopeptide repeat-containing protein At3g14330 (PCMP-H57), found in Arabidopsis thaliana (Mouse-ear cress).